A 146-amino-acid polypeptide reads, in one-letter code: Large ribosomal subunit protein uL24z (146 aa).

Disordered stretches follow at residues Met1–Arg26 and Lys121–Asp146. Basic residues predominate over residues Ser9–His18. Basic and acidic residues predominate over residues Lys121–Ser138.

The protein belongs to the universal ribosomal protein uL24 family.

The sequence is that of Large ribosomal subunit protein uL24z (RPL26A) from Arabidopsis thaliana (Mouse-ear cress).